Reading from the N-terminus, the 546-residue chain is Intermembrane transport protein PqiB (546 aa).

Topologically, residues 1 to 15 are cytoplasmic; the sequence is MESNNGEAKIQKVKN. A helical membrane pass occupies residues 16–36; it reads WSPVWIFPIVTALIGAWVLFY. The Periplasmic segment spans residues 37–546; sequence HYSHQGPEVT…KDPEPKRAKQ (510 aa). 3 MCE/MlaD regions span residues 42 to 133, 158 to 217, and 285 to 389; these read GPEV…LQPG, IRVI…NNVR, and HIDY…LDFY. Residues 437-464 are a coiled coil; it reads IEQATSTLSESQRTMKNLQTTLDSMNKI.

This sequence belongs to the PqiB family. In terms of assembly, homohexamer. May form a complex composed of PqiA, PqiB and PqiC. Interacts with PqiC.

The protein localises to the cell inner membrane. In terms of biological role, forms a tunnel that spans the entire periplasmic space. Could be implicated in lipid transport between the inner membrane and the outer membrane. Binds phospholipids. Required for outer membrane homeostasis. Contributes to membrane integrity. The protein is Intermembrane transport protein PqiB of Escherichia coli (strain K12).